The sequence spans 177 residues: MNWFGSNFFRCPEDLSLLNIYSPLLSHMSSEDEHFISNLRGHVPASAVVKQPVRGASGRTTITAIVQTGGGWSTGLFSVCRDRRICFCGLFCPMCLECDIARHYGECLCWPLLPGSTFALRIGTRERHKIQGTLCEDWLAVHCCWAFSICQVARELKMRTSQVYEICAVPMTKDTLV.

The protein belongs to the cornifelin family.

This chain is PLAC8-like protein 1 (PLAC8L1), found in Homo sapiens (Human).